Consider the following 156-residue polypeptide: ATP synthase subunit b (156 aa).

The helical transmembrane segment at 7 to 27 (LIGQTVAFIIFVWFCMKFVWP) threads the bilayer.

Belongs to the ATPase B chain family. F-type ATPases have 2 components, F(1) - the catalytic core - and F(0) - the membrane proton channel. F(1) has five subunits: alpha(3), beta(3), gamma(1), delta(1), epsilon(1). F(0) has three main subunits: a(1), b(2) and c(10-14). The alpha and beta chains form an alternating ring which encloses part of the gamma chain. F(1) is attached to F(0) by a central stalk formed by the gamma and epsilon chains, while a peripheral stalk is formed by the delta and b chains.

The protein resides in the cell inner membrane. F(1)F(0) ATP synthase produces ATP from ADP in the presence of a proton or sodium gradient. F-type ATPases consist of two structural domains, F(1) containing the extramembraneous catalytic core and F(0) containing the membrane proton channel, linked together by a central stalk and a peripheral stalk. During catalysis, ATP synthesis in the catalytic domain of F(1) is coupled via a rotary mechanism of the central stalk subunits to proton translocation. In terms of biological role, component of the F(0) channel, it forms part of the peripheral stalk, linking F(1) to F(0). This Shewanella oneidensis (strain ATCC 700550 / JCM 31522 / CIP 106686 / LMG 19005 / NCIMB 14063 / MR-1) protein is ATP synthase subunit b.